A 64-amino-acid chain; its full sequence is Large ribosomal subunit protein bL28 (64 aa).

The protein belongs to the bacterial ribosomal protein bL28 family.

This Bifidobacterium longum (strain NCC 2705) protein is Large ribosomal subunit protein bL28.